Reading from the N-terminus, the 375-residue chain is Protein RecA (375 aa).

ATP is bound at residue 88 to 95 (GPESSGKT).

The protein belongs to the RecA family.

Its subcellular location is the cytoplasm. Its function is as follows. Can catalyze the hydrolysis of ATP in the presence of single-stranded DNA, the ATP-dependent uptake of single-stranded DNA by duplex DNA, and the ATP-dependent hybridization of homologous single-stranded DNAs. It interacts with LexA causing its activation and leading to its autocatalytic cleavage. The polypeptide is Protein RecA (Rhodopirellula baltica (strain DSM 10527 / NCIMB 13988 / SH1)).